The following is a 395-amino-acid chain: Vomeronasal type-1 receptor 2 (395 aa).

The chain crosses the membrane as a helical span at residues 12–32 (LYPINISAAWHLGPLPVSCFV). Residues 33-51 (SNKYQCSLAFGATTGLRVL) are Extracellular-facing. The helical transmembrane segment at 52 to 72 (VVVVPQTQLSFLSSLCLVSLF) threads the bilayer. Residues 73–93 (LHSLVSAHGEKPTKPVGLDPT) lie on the Cytoplasmic side of the membrane. Residues 94 to 114 (LFQVVVGILGNFSLLYYYMFL) form a helical membrane-spanning segment. Residues 115-170 (YFRGYKPRSTDLILRHLTVADSLVILSKRIPETMATFGLKHFDNYFGCKFLLYAHR) lie on the Extracellular side of the membrane. Residues 171–191 (VGRGVSIGSTCLLSVFQVITI) traverse the membrane as a helical segment. Residues 192-208 (NPRNSRWAEMKVKAPTY) are Cytoplasmic-facing. A helical transmembrane segment spans residues 209-229 (IGLSNILCWAFHMLVNAIFPI). Residues 230–267 (YTTGKWSNNNITKKGDLGYCSAPLSDEVTKSVYAALTS) are Extracellular-facing. N239 carries an N-linked (GlcNAc...) asparagine glycan. A helical transmembrane segment spans residues 268-288 (FHDVLCLGLMLWASSSIVLVL). At 289–316 (YRHKQQVQHICRNNLYPNSSPGNRAIQS) the chain is on the cytoplasmic side. A helical membrane pass occupies residues 317 to 337 (ILALVSTFALCYALSFITYVY). At 338–346 (LALFDNSSW) the chain is on the extracellular side. N343 is a glycosylation site (N-linked (GlcNAc...) asparagine). The chain crosses the membrane as a helical span at residues 347 to 367 (WLVNTAALIIACFPTISPFVL). Topologically, residues 368–395 (MCRDPSRSRLCSICCRRNRRFFHDFRKM) are cytoplasmic.

It belongs to the G-protein coupled receptor 1 family.

Its subcellular location is the cell membrane. Putative pheromone receptor. The sequence is that of Vomeronasal type-1 receptor 2 (VN1R2) from Homo sapiens (Human).